We begin with the raw amino-acid sequence, 502 residues long: Aspartyl/glutamyl-tRNA(Asn/Gln) amidotransferase subunit B (502 aa).

The protein belongs to the GatB/GatE family. GatB subfamily. As to quaternary structure, heterotrimer of A, B and C subunits.

It carries out the reaction L-glutamyl-tRNA(Gln) + L-glutamine + ATP + H2O = L-glutaminyl-tRNA(Gln) + L-glutamate + ADP + phosphate + H(+). The catalysed reaction is L-aspartyl-tRNA(Asn) + L-glutamine + ATP + H2O = L-asparaginyl-tRNA(Asn) + L-glutamate + ADP + phosphate + 2 H(+). Functionally, allows the formation of correctly charged Asn-tRNA(Asn) or Gln-tRNA(Gln) through the transamidation of misacylated Asp-tRNA(Asn) or Glu-tRNA(Gln) in organisms which lack either or both of asparaginyl-tRNA or glutaminyl-tRNA synthetases. The reaction takes place in the presence of glutamine and ATP through an activated phospho-Asp-tRNA(Asn) or phospho-Glu-tRNA(Gln). This Arthrobacter sp. (strain FB24) protein is Aspartyl/glutamyl-tRNA(Asn/Gln) amidotransferase subunit B.